The primary structure comprises 70 residues: Large ribosomal subunit protein eL24 (70 aa).

Residues Cys7, Cys10, Cys33, and Cys37 each coordinate Zn(2+). The C4-type zinc-finger motif lies at 7–37 (CSFCGYEIEPGKGKMVVEKDGTVLYFCSSKC).

Belongs to the eukaryotic ribosomal protein eL24 family. As to quaternary structure, part of the 50S ribosomal subunit. Forms a cluster with proteins L3 and L14. Requires Zn(2+) as cofactor.

In terms of biological role, binds to the 23S rRNA. The chain is Large ribosomal subunit protein eL24 from Methanocaldococcus jannaschii (strain ATCC 43067 / DSM 2661 / JAL-1 / JCM 10045 / NBRC 100440) (Methanococcus jannaschii).